The sequence spans 436 residues: Acetyl-CoA decarbonylase/synthase complex subunit delta 2 (436 aa).

The protein belongs to the CdhD family. As to quaternary structure, heterodimer of delta and gamma chains. The ACDS complex is made up of alpha, epsilon, beta, gamma and delta chains with a probable stoichiometry of (alpha(2)epsilon(2))(4)-beta(8)-(gamma(1)delta(1))(8) (Potential).

It participates in one-carbon metabolism; methanogenesis from acetate. Its function is as follows. Part of a complex that catalyzes the reversible cleavage of acetyl-CoA, allowing growth on acetate as sole source of carbon and energy. Probably maintains the overall quaternary structure of the ACDS complex. The protein is Acetyl-CoA decarbonylase/synthase complex subunit delta 2 (cdhD2) of Methanosarcina acetivorans (strain ATCC 35395 / DSM 2834 / JCM 12185 / C2A).